Consider the following 940-residue polypeptide: Lon protease homolog 1, mitochondrial (940 aa).

The transit peptide at 1 to 61 (MLKLFTSSAS…AFFCSEPTNG (61 aa)) directs the protein to the mitochondrion. Residues 70–90 (KAVESDSEVSDSKSSSAIVPT) are disordered. Serine 74 carries the phosphoserine modification. One can recognise a Lon N-terminal domain in the interval 100-309 (VLALPVPHRP…LTLELMKKEM (210 aa)). Residue 464-471 (GPPGVGKT) participates in ATP binding. Residues 751-935 (QTPVGVVMGL…GKIFELAFGY (185 aa)) form the Lon proteolytic domain. Catalysis depends on residues serine 841 and lysine 884.

Belongs to the peptidase S16 family. As to quaternary structure, homohexamer or homoheptamer. Organized in a ring with a central cavity.

The protein localises to the mitochondrion matrix. The catalysed reaction is Hydrolysis of proteins in presence of ATP.. ATP-dependent serine protease that mediates the selective degradation of misfolded, unassembled or oxidatively damaged polypeptides as well as certain short-lived regulatory proteins in the mitochondrial matrix. May also have a chaperone function in the assembly of inner membrane protein complexes. Participates in the regulation of mitochondrial gene expression and in the maintenance of the integrity of the mitochondrial genome. Binds to mitochondrial DNA in a site-specific manner. The polypeptide is Lon protease homolog 1, mitochondrial (LON1) (Arabidopsis thaliana (Mouse-ear cress)).